A 158-amino-acid polypeptide reads, in one-letter code: Small ribosomal subunit protein eS10 (158 aa).

The disordered stretch occupies residues 99–158 (ETVRRGAVGRPDAPARSAEDRSAYRRAPTTPAAHDKKADVGPGSADLEFRGGFGRGRPAP). Gly residues predominate over residues 149–158 (GGFGRGRPAP).

Belongs to the eukaryotic ribosomal protein eS10 family.

It localises to the cytoplasm. This is Small ribosomal subunit protein eS10 (RpS10) from Spodoptera frugiperda (Fall armyworm).